The sequence spans 235 residues: Aspartate/glutamate leucyltransferase (235 aa).

The protein belongs to the R-transferase family. Bpt subfamily.

The protein resides in the cytoplasm. It catalyses the reaction N-terminal L-glutamyl-[protein] + L-leucyl-tRNA(Leu) = N-terminal L-leucyl-L-glutamyl-[protein] + tRNA(Leu) + H(+). The enzyme catalyses N-terminal L-aspartyl-[protein] + L-leucyl-tRNA(Leu) = N-terminal L-leucyl-L-aspartyl-[protein] + tRNA(Leu) + H(+). Its function is as follows. Functions in the N-end rule pathway of protein degradation where it conjugates Leu from its aminoacyl-tRNA to the N-termini of proteins containing an N-terminal aspartate or glutamate. This chain is Aspartate/glutamate leucyltransferase, found in Pseudomonas savastanoi pv. phaseolicola (strain 1448A / Race 6) (Pseudomonas syringae pv. phaseolicola (strain 1448A / Race 6)).